We begin with the raw amino-acid sequence, 163 residues long: MPRKVAVYPGSFDPITYGHLDIIDRGLRIFDEIIVAVARNSAKNSLFSIDERVDMIQRVLADNVRARVDTFDGLLVDYVLSQNATVIIRGLRAISDFEYEFQIAQMNRSISQDVETLFMMTSVPFGYLSSSIVKEVSSLNGPIDGLVPPLVREALKDKFSKPR.

Residue Ser11 coordinates substrate. Residues 11 to 12 (SF) and His19 contribute to the ATP site. Substrate contacts are provided by Lys43, Leu75, and Arg89. Residues 90-92 (GLR), Glu100, and 125-131 (FGYLSSS) each bind ATP.

The protein belongs to the bacterial CoaD family. As to quaternary structure, homohexamer. The cofactor is Mg(2+).

It localises to the cytoplasm. It carries out the reaction (R)-4'-phosphopantetheine + ATP + H(+) = 3'-dephospho-CoA + diphosphate. The protein operates within cofactor biosynthesis; coenzyme A biosynthesis; CoA from (R)-pantothenate: step 4/5. Its function is as follows. Reversibly transfers an adenylyl group from ATP to 4'-phosphopantetheine, yielding dephospho-CoA (dPCoA) and pyrophosphate. The chain is Phosphopantetheine adenylyltransferase from Geobacter metallireducens (strain ATCC 53774 / DSM 7210 / GS-15).